A 369-amino-acid chain; its full sequence is Glutamate 5-kinase (369 aa).

ATP is bound at residue Lys-8. Substrate contacts are provided by Ser-49, Asp-136, and Asn-148. Residues 168–169 (TD) and 211–217 (TGGMATK) each bind ATP. The PUA domain occupies 276–354 (KGELWLDEGA…TELANILGYA (79 aa)).

This sequence belongs to the glutamate 5-kinase family.

It localises to the cytoplasm. It carries out the reaction L-glutamate + ATP = L-glutamyl 5-phosphate + ADP. It functions in the pathway amino-acid biosynthesis; L-proline biosynthesis; L-glutamate 5-semialdehyde from L-glutamate: step 1/2. Its function is as follows. Catalyzes the transfer of a phosphate group to glutamate to form L-glutamate 5-phosphate. This Thermosynechococcus vestitus (strain NIES-2133 / IAM M-273 / BP-1) protein is Glutamate 5-kinase.